The primary structure comprises 115 residues: MPYFTIDTNIPQNSISSAFLKKASNVVAKALGKPESYVSIHVNGGQAMVFGGSEDPCAVCVLKSIGCVGPKVNNSHAEKLYKLLADELKIPKNRCYIEFVDIEASSMAFNGSTFG.

Proline 2 serves as the catalytic Proton acceptor; via imino nitrogen. Residues lysine 33 and isoleucine 65 each coordinate substrate.

This sequence belongs to the MIF family.

Its subcellular location is the secreted. It carries out the reaction L-dopachrome = 5,6-dihydroxyindole-2-carboxylate. The catalysed reaction is 3-phenylpyruvate = enol-phenylpyruvate. Tautomerization of the methyl ester of L-dopachrome. Inhibits migration of human peripheral blood mononuclear cells. The chain is Macrophage migration inhibitory factor homolog from Brugia malayi (Filarial nematode worm).